The sequence spans 104 residues: Small ribosomal subunit protein uS10 (104 aa).

Belongs to the universal ribosomal protein uS10 family. As to quaternary structure, part of the 30S ribosomal subunit.

Its function is as follows. Involved in the binding of tRNA to the ribosomes. The chain is Small ribosomal subunit protein uS10 from Thermosynechococcus vestitus (strain NIES-2133 / IAM M-273 / BP-1).